The chain runs to 318 residues: 4-diphosphocytidyl-2-C-methyl-D-erythritol kinase (318 aa).

Lysine 13 is an active-site residue. 101–111 (PVAGGMAGGSA) provides a ligand contact to ATP. Aspartate 143 is a catalytic residue. Residues 298-318 (PGARLVTDDRADRPTPPQVHA) are disordered.

It belongs to the GHMP kinase family. IspE subfamily.

It carries out the reaction 4-CDP-2-C-methyl-D-erythritol + ATP = 4-CDP-2-C-methyl-D-erythritol 2-phosphate + ADP + H(+). It functions in the pathway isoprenoid biosynthesis; isopentenyl diphosphate biosynthesis via DXP pathway; isopentenyl diphosphate from 1-deoxy-D-xylulose 5-phosphate: step 3/6. Catalyzes the phosphorylation of the position 2 hydroxy group of 4-diphosphocytidyl-2C-methyl-D-erythritol. The protein is 4-diphosphocytidyl-2-C-methyl-D-erythritol kinase of Saccharopolyspora erythraea (strain ATCC 11635 / DSM 40517 / JCM 4748 / NBRC 13426 / NCIMB 8594 / NRRL 2338).